A 127-amino-acid polypeptide reads, in one-letter code: Glycine cleavage system H protein (127 aa).

A Lipoyl-binding domain is found at Thr-24–Lys-105. Lys-65 bears the N6-lipoyllysine mark.

Belongs to the GcvH family. As to quaternary structure, the glycine cleavage system is composed of four proteins: P, T, L and H. It depends on (R)-lipoate as a cofactor.

Its function is as follows. The glycine cleavage system catalyzes the degradation of glycine. The H protein shuttles the methylamine group of glycine from the P protein to the T protein. This is Glycine cleavage system H protein from Chlorobium phaeovibrioides (strain DSM 265 / 1930) (Prosthecochloris vibrioformis (strain DSM 265)).